A 394-amino-acid chain; its full sequence is MRNYPLKAVCAVLMLGLSACSSLPTSGPTDSAVLEINQGADASELAAKVNVIELNESLVQQIYAAQQSQRFSGFADVRGNGGYAGAVNVGDVLEISIWEAPPAVLFGTTFSSEGQGSGHVTQLPSQIVNKNGTVTVPFVGNISVAGKTPEAIQAQIVASLSRKANQPQAVVKIANNNSSDVTVIRQGSAVRMPLTANDERVLDAVAAIGGSTGNIEDVTVQLTRGNQVKTLAFETLIADPKQNIVLRAGDVVSLLNTPYKFTGLGAVGNNQQLRFSSSGITLAEAIGKMGGLIDTRSDPRGVFVFRYMPFAQLDSKAQQEWAAKGYGNGMEVPTVYHANLLQPETMFLLQRFPIQDKDIVYVSNAPLSEFQKFLRIIFSITSPVTSTTNTIRSY.

An N-terminal signal peptide occupies residues 1–19; the sequence is MRNYPLKAVCAVLMLGLSA. Cysteine 20 carries N-palmitoyl cysteine lipidation. Cysteine 20 is lipidated: S-diacylglycerol cysteine.

The protein belongs to the BexD/CtrA/VexA family.

The protein resides in the cell outer membrane. Its function is as follows. May form an ATP-driven capsule polysaccharide export apparatus, in association with the BexA, BexB and BexC proteins. May function as a membrane anchor for capsular polysaccharides. Possible porin properties. The protein is Capsule polysaccharide export protein BexD (bexD) of Haemophilus influenzae.